The chain runs to 94 residues: U1-theraphotoxin-Sp1a (94 aa).

Residues 1–22 (MIFLLPSIISVMLLAEPVLMLG) form the signal peptide. The propeptide occupies 23–58 (DTEDADLMEMVQLSRPFFNPIIRAVELVELREERQR). 3 disulfides stabilise this stretch: cysteine 60–cysteine 78, cysteine 67–cysteine 83, and cysteine 77–cysteine 88. A Valine amide modification is found at valine 92.

Belongs to the neurotoxin 14 (magi-1) family. OAIP-1 subfamily. Expressed by the venom gland.

The protein resides in the secreted. Probable ion channel inhibitor. Shows insecticidal activity. Acts synergistically with the neonicotinoid insecticide imidacloprid. Is neither a repellent that repels insects nor an attractant that is preferentially consumed by insects. Is very stable. This is U1-theraphotoxin-Sp1a from Selenotypus plumipes (Australian featherleg tarantula).